A 261-amino-acid chain; its full sequence is Indole-3-glycerol phosphate synthase (261 aa).

It belongs to the TrpC family.

The enzyme catalyses 1-(2-carboxyphenylamino)-1-deoxy-D-ribulose 5-phosphate + H(+) = (1S,2R)-1-C-(indol-3-yl)glycerol 3-phosphate + CO2 + H2O. It participates in amino-acid biosynthesis; L-tryptophan biosynthesis; L-tryptophan from chorismate: step 4/5. The chain is Indole-3-glycerol phosphate synthase from Alkaliphilus metalliredigens (strain QYMF).